Here is a 241-residue protein sequence, read N- to C-terminus: Phosphatidylcholine synthase (241 aa).

At 1-15 (MKIFNYKRVPYAEIR) the chain is on the cytoplasmic side. A helical transmembrane segment spans residues 16 to 36 (AFSVHILTASGSFLAFLGVVA). The Periplasmic segment spans residues 37–41 (ASEHR). A helical membrane pass occupies residues 42–62 (FVDMFWWLGLALLVDGIDGPI). Over 63-76 (ARKVRVKEVLPNWS) the chain is Cytoplasmic. The chain crosses the membrane as a helical span at residues 77–97 (GDTLDNIIDYVTYVLLPAFAL). Topologically, residues 98 to 100 (YQS) are periplasmic. A helical transmembrane segment spans residues 101–121 (GMIGEPLSFVAAGMIVVSSAI). At 122–133 (YYADMGMKTDEY) the chain is on the cytoplasmic side. A helical transmembrane segment spans residues 134–154 (FFSGFPVVWNMVVFTLFVMDA). Topologically, residues 155–159 (SATTA) are periplasmic. The chain crosses the membrane as a helical span at residues 160–180 (MTVVTVSVFLTFLPINFLHPV). Residues 181–187 (RVKRLRP) are Cytoplasmic-facing. Residues 188-208 (LNLLVVAIWCALGGYALLMHF) traverse the membrane as a helical segment. Residues 209–214 (ETPTWA) are Periplasmic-facing. The helical transmembrane segment at 215–235 (VIAFVASGIYLYCIGGILQFF) threads the bilayer. Over 236-241 (PSLGAK) the chain is Cytoplasmic.

The protein belongs to the CDP-alcohol phosphatidyltransferase class-I family. Requires Mn(2+) as cofactor.

The protein resides in the cell inner membrane. The catalysed reaction is a CDP-1,2-diacyl-sn-glycerol + choline = a 1,2-diacyl-sn-glycero-3-phosphocholine + CMP + H(+). Its function is as follows. Condenses choline with CDP-diglyceride to produce phosphatidylcholine and CMP. Affects motility, biofilm formation and virulence of this bacterium when there is a complete loss of phosphatidylcholine formation due to absence of both the synthase (pcs) and the methylation (pmtA) pathways. The polypeptide is Phosphatidylcholine synthase (Agrobacterium fabrum (strain C58 / ATCC 33970) (Agrobacterium tumefaciens (strain C58))).